The sequence spans 418 residues: Probable serine/threonine-protein kinase DDB_G0280461 (418 aa).

In terms of domain architecture, Protein kinase spans 14–271 (KIEENEFSKG…IVQTLDQLAI (258 aa)). Residues 20–28 (FSKGSFAKV) and Lys41 each bind ATP. The Proton acceptor role is filled by Asp139. Disordered regions lie at residues 327–356 (NNNN…NNNN) and 377–418 (SVNS…CLIN). Over residues 377–402 (SVNSSFSNSSLGSNGSNSSGTSTSSG) the composition is skewed to low complexity. Positions 403 to 418 (GKKRSQKRKSWKCLIN) are enriched in basic residues.

The protein belongs to the protein kinase superfamily. TKL Ser/Thr protein kinase family.

The catalysed reaction is L-seryl-[protein] + ATP = O-phospho-L-seryl-[protein] + ADP + H(+). It carries out the reaction L-threonyl-[protein] + ATP = O-phospho-L-threonyl-[protein] + ADP + H(+). The sequence is that of Probable serine/threonine-protein kinase DDB_G0280461 from Dictyostelium discoideum (Social amoeba).